The sequence spans 122 residues: Big defensin (122 aa).

A signal peptide spans 1–28 (MTRPSLVRCYSLFFTALIVMAIICPAWS). Positions 29 to 34 (EEIPKS) are excised as a propeptide. 3 disulfide bridges follow: cysteine 88-cysteine 119, cysteine 95-cysteine 114, and cysteine 99-cysteine 120.

It belongs to the big defensin family. Expressed in hemocytes.

It localises to the secreted. In terms of biological role, significantly inhibits the growth of Gram-negative and Gram-positive bacteria and fungi in vitro. The chain is Big defensin from Argopecten irradians (Bay scallop).